A 270-amino-acid polypeptide reads, in one-letter code: Putative phosphoenolpyruvate synthase regulatory protein (270 aa).

150–157 (GVSRCGKT) provides a ligand contact to ADP.

It belongs to the pyruvate, phosphate/water dikinase regulatory protein family. PSRP subfamily.

The catalysed reaction is [pyruvate, water dikinase] + ADP = [pyruvate, water dikinase]-phosphate + AMP + H(+). It catalyses the reaction [pyruvate, water dikinase]-phosphate + phosphate + H(+) = [pyruvate, water dikinase] + diphosphate. Its function is as follows. Bifunctional serine/threonine kinase and phosphorylase involved in the regulation of the phosphoenolpyruvate synthase (PEPS) by catalyzing its phosphorylation/dephosphorylation. This chain is Putative phosphoenolpyruvate synthase regulatory protein, found in Shewanella woodyi (strain ATCC 51908 / MS32).